A 99-amino-acid polypeptide reads, in one-letter code: NADH-ubiquinone oxidoreductase chain 4L (99 aa).

Transmembrane regions (helical) follow at residues 1-21 (MTIY…FFTQ), 25-45 (ILSL…SVAV), and 56-76 (VMIL…SLLV).

Belongs to the complex I subunit 4L family.

It is found in the mitochondrion membrane. It catalyses the reaction a ubiquinone + NADH + 5 H(+)(in) = a ubiquinol + NAD(+) + 4 H(+)(out). In terms of biological role, core subunit of the mitochondrial membrane respiratory chain NADH dehydrogenase (Complex I) that is believed to belong to the minimal assembly required for catalysis. Complex I functions in the transfer of electrons from NADH to the respiratory chain. The immediate electron acceptor for the enzyme is believed to be ubiquinone. The chain is NADH-ubiquinone oxidoreductase chain 4L (ND4L) from Albinaria caerulea (Land snail).